Here is a 288-residue protein sequence, read N- to C-terminus: Lipoyl synthase (288 aa).

7 residues coordinate [4Fe-4S] cluster: C42, C47, C53, C68, C72, C75, and S280. Residues 54–269 (WGEGTATFMI…EKYGIELGFR (216 aa)) enclose the Radical SAM core domain.

The protein belongs to the radical SAM superfamily. Lipoyl synthase family. [4Fe-4S] cluster serves as cofactor.

Its subcellular location is the cytoplasm. It carries out the reaction [[Fe-S] cluster scaffold protein carrying a second [4Fe-4S](2+) cluster] + N(6)-octanoyl-L-lysyl-[protein] + 2 oxidized [2Fe-2S]-[ferredoxin] + 2 S-adenosyl-L-methionine + 4 H(+) = [[Fe-S] cluster scaffold protein] + N(6)-[(R)-dihydrolipoyl]-L-lysyl-[protein] + 4 Fe(3+) + 2 hydrogen sulfide + 2 5'-deoxyadenosine + 2 L-methionine + 2 reduced [2Fe-2S]-[ferredoxin]. The protein operates within protein modification; protein lipoylation via endogenous pathway; protein N(6)-(lipoyl)lysine from octanoyl-[acyl-carrier-protein]: step 2/2. Functionally, catalyzes the radical-mediated insertion of two sulfur atoms into the C-6 and C-8 positions of the octanoyl moiety bound to the lipoyl domains of lipoate-dependent enzymes, thereby converting the octanoylated domains into lipoylated derivatives. This Flavobacterium johnsoniae (strain ATCC 17061 / DSM 2064 / JCM 8514 / BCRC 14874 / CCUG 350202 / NBRC 14942 / NCIMB 11054 / UW101) (Cytophaga johnsonae) protein is Lipoyl synthase.